The chain runs to 307 residues: tRNA pseudouridine synthase B (307 aa).

The active-site Nucleophile is Asp-38.

It belongs to the pseudouridine synthase TruB family. Type 1 subfamily.

The catalysed reaction is uridine(55) in tRNA = pseudouridine(55) in tRNA. Its function is as follows. Responsible for synthesis of pseudouridine from uracil-55 in the psi GC loop of transfer RNAs. This Lachnoclostridium phytofermentans (strain ATCC 700394 / DSM 18823 / ISDg) (Clostridium phytofermentans) protein is tRNA pseudouridine synthase B.